The chain runs to 126 residues: UPF0102 protein Cphamn1_0017 (126 aa).

This sequence belongs to the UPF0102 family.

The protein is UPF0102 protein Cphamn1_0017 of Chlorobium phaeobacteroides (strain BS1).